Here is a 65-residue protein sequence, read N- to C-terminus: Small ribosomal subunit protein bS21B (65 aa).

This sequence belongs to the bacterial ribosomal protein bS21 family.

The chain is Small ribosomal subunit protein bS21B from Geobacter sulfurreducens (strain ATCC 51573 / DSM 12127 / PCA).